The chain runs to 339 residues: N-acetyl-gamma-glutamyl-phosphate reductase (339 aa).

The active site involves Cys-144.

The protein belongs to the NAGSA dehydrogenase family. Type 1 subfamily.

The protein localises to the cytoplasm. It carries out the reaction N-acetyl-L-glutamate 5-semialdehyde + phosphate + NADP(+) = N-acetyl-L-glutamyl 5-phosphate + NADPH + H(+). It functions in the pathway amino-acid biosynthesis; L-arginine biosynthesis; N(2)-acetyl-L-ornithine from L-glutamate: step 3/4. Functionally, catalyzes the NADPH-dependent reduction of N-acetyl-5-glutamyl phosphate to yield N-acetyl-L-glutamate 5-semialdehyde. The protein is N-acetyl-gamma-glutamyl-phosphate reductase of Methanobrevibacter smithii (strain ATCC 35061 / DSM 861 / OCM 144 / PS).